The primary structure comprises 232 residues: Cytidylate kinase (232 aa).

10–18 (GPAASGKST) is a binding site for ATP.

This sequence belongs to the cytidylate kinase family. Type 1 subfamily.

It localises to the cytoplasm. It carries out the reaction CMP + ATP = CDP + ADP. The catalysed reaction is dCMP + ATP = dCDP + ADP. The sequence is that of Cytidylate kinase from Phytoplasma mali (strain AT).